The chain runs to 311 residues: Forkhead box protein I2 (311 aa).

The segment at residues 99-193 (RPPYSYSALI…DNGNFRRKRR (95 aa)) is a DNA-binding region (fork-head). Disordered regions lie at residues 188–237 (FRRK…TTTC) and 263–294 (FSLRRPPPTAAAHSPQIPNTAPGFAPGHQTGA). Low complexity predominate over residues 219–231 (STPQDPQTSPSPS).

The protein resides in the nucleus. Possible transcriptional activator. The sequence is that of Forkhead box protein I2 from Mus musculus (Mouse).